Here is a 409-residue protein sequence, read N- to C-terminus: Serine/threonine transporter SstT (409 aa).

The next 9 helical transmembrane spans lie at leucine 17–alanine 37, phenylalanine 49–isoleucine 69, isoleucine 83–phenylalanine 103, alanine 142–phenylalanine 162, valine 180–alanine 200, leucine 218–phenylalanine 238, methionine 299–isoleucine 319, valine 331–isoleucine 351, and leucine 357–isoleucine 377.

It belongs to the dicarboxylate/amino acid:cation symporter (DAACS) (TC 2.A.23) family.

The protein localises to the cell inner membrane. It carries out the reaction L-serine(in) + Na(+)(in) = L-serine(out) + Na(+)(out). The catalysed reaction is L-threonine(in) + Na(+)(in) = L-threonine(out) + Na(+)(out). Involved in the import of serine and threonine into the cell, with the concomitant import of sodium (symport system). The polypeptide is Serine/threonine transporter SstT (Pseudomonas paraeruginosa (strain DSM 24068 / PA7) (Pseudomonas aeruginosa (strain PA7))).